The chain runs to 142 residues: MFLGRFTHAIDDKGRLAIPARFREAFRGQGVLTRGIDRCLTLYPMDSWQPLAEKVSSLSISDPDARAFRRMVFAEATVVEFDRQGRILLPPELRAYAGLEREAIVVGVHSYVEIWSPENWAAQAELLAAEGPSIAQRLATLI.

SpoVT-AbrB domains lie at 5–47 (RFTH…PMDS) and 76–119 (ATVV…SPEN).

It belongs to the MraZ family. Forms oligomers.

The protein resides in the cytoplasm. The protein localises to the nucleoid. The protein is Transcriptional regulator MraZ of Thermomicrobium roseum (strain ATCC 27502 / DSM 5159 / P-2).